A 285-amino-acid polypeptide reads, in one-letter code: Protoheme IX farnesyltransferase (285 aa).

8 helical membrane passes run 19–39, 40–60, 90–110, 111–131, 135–155, 165–185, 220–240, and 265–285; these read RIIW…GKLM, PLSI…SMII, AIYV…LDNP, LTSF…TVWL, SPLN…AGYA, SILL…ALAL, IPFA…VAGI, and FKFS…TRLI.

This sequence belongs to the UbiA prenyltransferase family. Protoheme IX farnesyltransferase subfamily.

It localises to the cell membrane. It carries out the reaction heme b + (2E,6E)-farnesyl diphosphate + H2O = Fe(II)-heme o + diphosphate. It functions in the pathway porphyrin-containing compound metabolism; heme O biosynthesis; heme O from protoheme: step 1/1. Converts heme B (protoheme IX) to heme O by substitution of the vinyl group on carbon 2 of heme B porphyrin ring with a hydroxyethyl farnesyl side group. In Metallosphaera sedula (strain ATCC 51363 / DSM 5348 / JCM 9185 / NBRC 15509 / TH2), this protein is Protoheme IX farnesyltransferase.